We begin with the raw amino-acid sequence, 479 residues long: mRNA export factor ICP27 homolog (479 aa).

Low complexity predominate over residues 1 to 15 (MVPSQRLSRTSSISS). 2 disordered regions span residues 1 to 78 (MVPS…SSVV) and 92 to 210 (KWDL…NKPW). Over residues 35 to 44 (TDCDMDPMEG) the composition is skewed to acidic residues. Positions 132-142 (EVHGCTDESYG) are enriched in basic and acidic residues. Positions 354, 445, 449, and 454 each coordinate Zn(2+). Residues 354 to 454 (CFLPNTRDYN…HTRDCRSASC (101 aa)) form a CHC2-type zinc finger.

The protein belongs to the HHV-1 ICP27 protein family. In terms of assembly, interacts with host XPO1 and with the XPO1 export pathway components small GTPase RAN and nucleoporin NUP214. Interacts with host SPEN, OTT1 and OTT3. Interacts with host SRSF1, SRSF3, SRSF7 and SRPK1. Interacts with host DHX9; this interaction may have an inhibitory effect on virion production. Interacts (via N-terminus) with host NXF1; this interaction plays a role in mRNA export. In terms of processing, phosphorylated by cellular protein kinase CK2.

Its subcellular location is the host nucleus. It localises to the host cytoplasm. Promotes the nuclear export of a subset of early and late viral mRNAs by interacting with mRNAs and cellular export proteins. Additionally may prevent the establishment of cellular antiviral state, by acting as an alternative splicing factor for cellular RNAs such as STAT1, resulting in a STAT1 mRNA incapable of producing the STAT1alpha isoform. The polypeptide is mRNA export factor ICP27 homolog (Homo sapiens (Human)).